Consider the following 596-residue polypeptide: Aspartate--tRNA(Asp/Asn) ligase (596 aa).

Glutamate 169 lines the L-aspartate pocket. Positions 193-196 (QLFK) are aspartate. An L-aspartate-binding site is contributed by arginine 215. ATP contacts are provided by residues 215-217 (RDE) and glutamine 224. Histidine 447 provides a ligand contact to L-aspartate. Glutamate 481 is a binding site for ATP. Arginine 488 contributes to the L-aspartate binding site. Residue 533–536 (GWDR) participates in ATP binding. The disordered stretch occupies residues 559–596 (GYDPLTQAPAPITAQQRKEAGVDFKPEAKKADPGATKA). Residues 574–590 (QRKEAGVDFKPEAKKAD) show a composition bias toward basic and acidic residues.

This sequence belongs to the class-II aminoacyl-tRNA synthetase family. Type 1 subfamily. Homodimer.

It localises to the cytoplasm. The enzyme catalyses tRNA(Asx) + L-aspartate + ATP = L-aspartyl-tRNA(Asx) + AMP + diphosphate. Its function is as follows. Aspartyl-tRNA synthetase with relaxed tRNA specificity since it is able to aspartylate not only its cognate tRNA(Asp) but also tRNA(Asn). Reaction proceeds in two steps: L-aspartate is first activated by ATP to form Asp-AMP and then transferred to the acceptor end of tRNA(Asp/Asn). The polypeptide is Aspartate--tRNA(Asp/Asn) ligase (Arthrobacter sp. (strain FB24)).